A 171-amino-acid chain; its full sequence is Adenine phosphoribosyltransferase (171 aa).

The protein belongs to the purine/pyrimidine phosphoribosyltransferase family. As to quaternary structure, homodimer.

The protein localises to the cytoplasm. It carries out the reaction AMP + diphosphate = 5-phospho-alpha-D-ribose 1-diphosphate + adenine. Its pathway is purine metabolism; AMP biosynthesis via salvage pathway; AMP from adenine: step 1/1. Functionally, catalyzes a salvage reaction resulting in the formation of AMP, that is energically less costly than de novo synthesis. The protein is Adenine phosphoribosyltransferase of Solidesulfovibrio magneticus (strain ATCC 700980 / DSM 13731 / RS-1) (Desulfovibrio magneticus).